A 230-amino-acid polypeptide reads, in one-letter code: Cytochrome c oxidase subunit 2 (230 aa).

Over 1 to 14 (MAHPSQLGFQDAAS) the chain is Mitochondrial intermembrane. The chain crosses the membrane as a helical span at residues 15–45 (PVMEELLHFHDHALMIVFLISTLVLYIIAAT). Residues 46–59 (ASTKLTDKYILDSQ) are Mitochondrial matrix-facing. A helical membrane pass occupies residues 60-87 (EIEVIWTIMPAVILILIALPSLRILYLM). Over 88–230 (DEINDPHLTV…NWSSLMLEDA (143 aa)) the chain is Mitochondrial intermembrane. Cu cation-binding residues include His161, Cys196, Glu198, Cys200, His204, and Met207. Glu198 lines the Mg(2+) pocket.

This sequence belongs to the cytochrome c oxidase subunit 2 family. In terms of assembly, component of the cytochrome c oxidase (complex IV, CIV), a multisubunit enzyme composed of 14 subunits. The complex is composed of a catalytic core of 3 subunits MT-CO1, MT-CO2 and MT-CO3, encoded in the mitochondrial DNA, and 11 supernumerary subunits COX4I, COX5A, COX5B, COX6A, COX6B, COX6C, COX7A, COX7B, COX7C, COX8 and NDUFA4, which are encoded in the nuclear genome. The complex exists as a monomer or a dimer and forms supercomplexes (SCs) in the inner mitochondrial membrane with NADH-ubiquinone oxidoreductase (complex I, CI) and ubiquinol-cytochrome c oxidoreductase (cytochrome b-c1 complex, complex III, CIII), resulting in different assemblies (supercomplex SCI(1)III(2)IV(1) and megacomplex MCI(2)III(2)IV(2)). Found in a complex with TMEM177, COA6, COX18, COX20, SCO1 and SCO2. Interacts with TMEM177 in a COX20-dependent manner. Interacts with COX20. Interacts with COX16. Requires Cu cation as cofactor.

Its subcellular location is the mitochondrion inner membrane. It carries out the reaction 4 Fe(II)-[cytochrome c] + O2 + 8 H(+)(in) = 4 Fe(III)-[cytochrome c] + 2 H2O + 4 H(+)(out). Its function is as follows. Component of the cytochrome c oxidase, the last enzyme in the mitochondrial electron transport chain which drives oxidative phosphorylation. The respiratory chain contains 3 multisubunit complexes succinate dehydrogenase (complex II, CII), ubiquinol-cytochrome c oxidoreductase (cytochrome b-c1 complex, complex III, CIII) and cytochrome c oxidase (complex IV, CIV), that cooperate to transfer electrons derived from NADH and succinate to molecular oxygen, creating an electrochemical gradient over the inner membrane that drives transmembrane transport and the ATP synthase. Cytochrome c oxidase is the component of the respiratory chain that catalyzes the reduction of oxygen to water. Electrons originating from reduced cytochrome c in the intermembrane space (IMS) are transferred via the dinuclear copper A center (CU(A)) of subunit 2 and heme A of subunit 1 to the active site in subunit 1, a binuclear center (BNC) formed by heme A3 and copper B (CU(B)). The BNC reduces molecular oxygen to 2 water molecules using 4 electrons from cytochrome c in the IMS and 4 protons from the mitochondrial matrix. The polypeptide is Cytochrome c oxidase subunit 2 (mt-co2) (Tetraodon nigroviridis (Spotted green pufferfish)).